Reading from the N-terminus, the 525-residue chain is GMP synthase [glutamine-hydrolyzing] (525 aa).

In terms of domain architecture, Glutamine amidotransferase type-1 spans 9 to 207; it reads RILILDFGSQ…VLDICGCAAL (199 aa). The active-site Nucleophile is the Cys-86. Catalysis depends on residues His-181 and Glu-183. The 193-residue stretch at 208–400 folds into the GMPS ATP-PPase domain; the sequence is WTPSNIVDDA…LGLPYDMVYR (193 aa). ATP is bound at residue 235 to 241; the sequence is SGGVDSS.

In terms of assembly, homodimer.

It catalyses the reaction XMP + L-glutamine + ATP + H2O = GMP + L-glutamate + AMP + diphosphate + 2 H(+). Its pathway is purine metabolism; GMP biosynthesis; GMP from XMP (L-Gln route): step 1/1. Functionally, catalyzes the synthesis of GMP from XMP. The sequence is that of GMP synthase [glutamine-hydrolyzing] from Pseudomonas aeruginosa (strain UCBPP-PA14).